A 445-amino-acid polypeptide reads, in one-letter code: rRNA methyltransferase 3B, mitochondrial (445 aa).

The transit peptide at 1–37 (MATRIASMRFRCALFQSALTLGRNEVNIKRYVRRRRA) directs the protein to the mitochondrion. 2 disordered regions span residues 52 to 90 (EGVI…SQPV) and 311 to 334 (HSTT…SDYG). Polar residues-rich tracts occupy residues 54–70 (VISQ…NDIT), 78–90 (IENP…SQPV), and 311–324 (HSTT…NTTP). S-adenosyl-L-methionine is bound by residues G387, I411, and L420.

This sequence belongs to the class IV-like SAM-binding methyltransferase superfamily. RNA methyltransferase TrmH family.

It localises to the mitochondrion. It catalyses the reaction a uridine in rRNA + S-adenosyl-L-methionine = a 2'-O-methyluridine in rRNA + S-adenosyl-L-homocysteine + H(+). S-adenosyl-L-methionine-dependent 2'-O-ribose methyltransferase that catalyzes the formation of 2'-O-methylguanosine at position 1485 (Gm1485) in the mitochondrial large subunit ribosomal RNA (mtLSU rRNA), a conserved modification in the peptidyl transferase domain of the mtLSU rRNA. Also required for formation of 2'-O-methyluridine at position 1484 (Um1484) mediated by MRM2. The protein is rRNA methyltransferase 3B, mitochondrial of Danio rerio (Zebrafish).